We begin with the raw amino-acid sequence, 491 residues long: Protein nucleotidyltransferase YdiU (491 aa).

The ATP site is built by Gly-94, Gly-96, Arg-97, Lys-117, Asp-129, Gly-130, Arg-180, and Arg-187. Asp-256 functions as the Proton acceptor in the catalytic mechanism. Asn-257 and Asp-266 together coordinate Mg(2+). Residue Asp-266 participates in ATP binding.

It belongs to the SELO family. The cofactor is Mg(2+). It depends on Mn(2+) as a cofactor.

The catalysed reaction is L-seryl-[protein] + ATP = 3-O-(5'-adenylyl)-L-seryl-[protein] + diphosphate. It catalyses the reaction L-threonyl-[protein] + ATP = 3-O-(5'-adenylyl)-L-threonyl-[protein] + diphosphate. The enzyme catalyses L-tyrosyl-[protein] + ATP = O-(5'-adenylyl)-L-tyrosyl-[protein] + diphosphate. It carries out the reaction L-histidyl-[protein] + UTP = N(tele)-(5'-uridylyl)-L-histidyl-[protein] + diphosphate. The catalysed reaction is L-seryl-[protein] + UTP = O-(5'-uridylyl)-L-seryl-[protein] + diphosphate. It catalyses the reaction L-tyrosyl-[protein] + UTP = O-(5'-uridylyl)-L-tyrosyl-[protein] + diphosphate. In terms of biological role, nucleotidyltransferase involved in the post-translational modification of proteins. It can catalyze the addition of adenosine monophosphate (AMP) or uridine monophosphate (UMP) to a protein, resulting in modifications known as AMPylation and UMPylation. The sequence is that of Protein nucleotidyltransferase YdiU from Clostridium botulinum (strain ATCC 19397 / Type A).